A 593-amino-acid chain; its full sequence is Tyrosine-protein phosphatase non-receptor type 11 (593 aa).

At Thr2 the chain carries N-acetylthreonine. 2 consecutive SH2 domains span residues 6-102 (WFHP…KYPL) and 112-216 (WFHG…KQPL). 2 positions are modified to phosphotyrosine: Tyr62 and Tyr66. The Tyrosine-protein phosphatase domain maps to 247–521 (FWEEFETLQQ…RFIYMAVQHY (275 aa)). Substrate is bound by residues Asp425, 459–465 (CSAGIGR), and Gln506. Cys459 functions as the Phosphocysteine intermediate in the catalytic mechanism. Residues Tyr542 and Tyr580 each carry the phosphotyrosine; by PDGFR modification.

The protein belongs to the protein-tyrosine phosphatase family. Non-receptor class 2 subfamily. As to quaternary structure, interacts with CD84 and with phosphorylated SIT1 and MZPL1. Interacts with FCRL4, FCRL6 and ANKHD1. Interacts with GAREM1 (tyrosine phosphorylated); the interaction increases MAPK/ERK activity and does not affect the GRB2/SOS complex formation. Interacts with PTPNS1 and BCAR3. Interacts with phosphorylated LIME1. Interacts with SHB and INPP5D/SHIP1. Interacts with KIR2DL1; the interaction is enhanced by ARRB2. Interacts with GAB2. Interacts with TERT; the interaction retains TERT in the nucleus. Interacts with PECAM1 and FER. Interacts with EPHA2 (activated); participates in PTK2/FAK1 dephosphorylation in EPHA2 downstream signaling. Interacts with MILR1 (tyrosine phosphorylated). Interacts with FLT1 (tyrosine-phosphorylated), FLT3 (tyrosine-phosphorylated), FLT4 (tyrosine-phosphorylated), KIT and GRB2. Interacts with ROS1; mediates PTPN11 phosphorylation. Interacts with PDGFRA (tyrosine phosphorylated). Interacts with PDGFRB (tyrosine phosphorylated); this interaction increases the PTPN11 phosphatase activity. Interacts (via SH2 domain) with TEK/TIE2 (tyrosine phosphorylated). Interacts with CEACAM1 (via cytoplasmic domain); this interaction depends on the monomer/dimer equilibrium and is phosphorylation-dependent. Interacts with MPIG6B (via ITIM motif). Interacts with SIGLEC10. Interacts with Lilrb4a (when tyrosine phosphorylated). Interacts with SIGLEC10. Interacts with CLEC12B (via ITIM motif); this interaction triggers dephosphorylation and activation of PTPN11. Interacts (via SH2 domains) with NEDD9/CAS-L; the interaction is enhanced when NEDD9/CAS-L is tyrosine phosphorylated. Interacts with PIRB; when PIRB is phosphorylated by LYN at 'Tyr-794' and 'Tyr-824'. In terms of processing, phosphorylated on Tyr-542 and Tyr-580 upon receptor protein tyrosine kinase activation; which creates a binding site for GRB2 and other SH2-containing proteins. Phosphorylated upon activation of the receptor-type kinase FLT3. Phosphorylated by activated PDGFRB. Phosphorylated upon activation of the receptor-type kinase PDGFRA. In terms of tissue distribution, highly expressed in brain, heart and kidney.

The protein localises to the cytoplasm. The catalysed reaction is O-phospho-L-tyrosyl-[protein] + H2O = L-tyrosyl-[protein] + phosphate. Functionally, acts downstream of various receptor and cytoplasmic protein tyrosine kinases to participate in the signal transduction from the cell surface to the nucleus. Positively regulates MAPK signal transduction pathway. Dephosphorylates GAB1, ARHGAP35 and EGFR. Dephosphorylates ROCK2 at 'Tyr-722' resulting in stimulation of its RhoA binding activity. Dephosphorylates CDC73. Dephosphorylates SOX9 on tyrosine residues, leading to inactivate SOX9 and promote ossification. Dephosphorylates tyrosine-phosphorylated NEDD9/CAS-L. The protein is Tyrosine-protein phosphatase non-receptor type 11 (Ptpn11) of Mus musculus (Mouse).